We begin with the raw amino-acid sequence, 361 residues long: MTSSYRQQLQAKIDRITTQFSEFTPPTLEVFESPEQHFRMRAEFRIWHTENDMFYAMFERNDDGKQKTVVRIDEFPIADKSINDLMPLLLAELKANSLLSQRLFEVDFLATLSGEMLVTLIYHRKLNQEWEQAAKALAEKLNIKIMGRSRGQKIVIGDDFVVEEFELLNRSFKYKQIESSFTQPNAQVCKKMLQWACDAAEGSKKHLLELYCGNGNFTLPLSLKFERVLATELAKSSVYAAQWNIEQNQIDNIQVARLSAEEFTQAYQGEREFRRLQEADIDIQSYDFGTVFVDPPRAGIDDETLKLLQGFERIIYISCNPDTLYENLKTLTQTHRVTKFALFDQFPYTHHVESGVLLEKI.

The S-adenosyl-L-methionine site is built by Gln-183, Tyr-211, Asn-216, Glu-232, and Asp-294. Cys-319 acts as the Nucleophile in catalysis. Glu-353 acts as the Proton acceptor in catalysis.

Belongs to the class I-like SAM-binding methyltransferase superfamily. RNA M5U methyltransferase family. TrmA subfamily.

The enzyme catalyses uridine(54) in tRNA + S-adenosyl-L-methionine = 5-methyluridine(54) in tRNA + S-adenosyl-L-homocysteine + H(+). The catalysed reaction is uridine(341) in tmRNA + S-adenosyl-L-methionine = 5-methyluridine(341) in tmRNA + S-adenosyl-L-homocysteine + H(+). Its function is as follows. Dual-specificity methyltransferase that catalyzes the formation of 5-methyluridine at position 54 (m5U54) in all tRNAs, and that of position 341 (m5U341) in tmRNA (transfer-mRNA). This Acinetobacter baumannii (strain AB307-0294) protein is tRNA/tmRNA (uracil-C(5))-methyltransferase.